The following is a 152-amino-acid chain: Putative pre-16S rRNA nuclease (152 aa).

This sequence belongs to the YqgF nuclease family.

Its subcellular location is the cytoplasm. In terms of biological role, could be a nuclease involved in processing of the 5'-end of pre-16S rRNA. This Synechocystis sp. (strain ATCC 27184 / PCC 6803 / Kazusa) protein is Putative pre-16S rRNA nuclease.